The following is a 370-amino-acid chain: Isopentenyl-diphosphate delta-isomerase (370 aa).

8-9 (RK) contributes to the substrate binding site. FMN contacts are provided by residues threonine 65, 66 to 68 (GMT), serine 99, and asparagine 127. 99–101 (SQR) lines the substrate pocket. Glutamine 166 serves as a coordination point for substrate. Residue glutamate 167 coordinates Mg(2+). Residues lysine 198, serine 223, threonine 228, 277 to 279 (GMR), and 298 to 299 (AL) contribute to the FMN site.

Belongs to the IPP isomerase type 2 family. As to quaternary structure, homooctamer. Dimer of tetramers. Requires FMN as cofactor. The cofactor is NADPH. It depends on Mg(2+) as a cofactor.

It localises to the cytoplasm. The enzyme catalyses isopentenyl diphosphate = dimethylallyl diphosphate. In terms of biological role, involved in the biosynthesis of isoprenoids. Catalyzes the 1,3-allylic rearrangement of the homoallylic substrate isopentenyl (IPP) to its allylic isomer, dimethylallyl diphosphate (DMAPP). The sequence is that of Isopentenyl-diphosphate delta-isomerase from Pyrococcus abyssi (strain GE5 / Orsay).